Reading from the N-terminus, the 142-residue chain is Large ribosomal subunit protein uL11 (142 aa).

The protein belongs to the universal ribosomal protein uL11 family. Part of the ribosomal stalk of the 50S ribosomal subunit. Interacts with L10 and the large rRNA to form the base of the stalk. L10 forms an elongated spine to which L12 dimers bind in a sequential fashion forming a multimeric L10(L12)X complex. In terms of processing, one or more lysine residues are methylated.

Functionally, forms part of the ribosomal stalk which helps the ribosome interact with GTP-bound translation factors. This is Large ribosomal subunit protein uL11 from Acinetobacter baumannii (strain AB307-0294).